A 492-amino-acid polypeptide reads, in one-letter code: Forkhead box protein O6 (492 aa).

Disordered stretches follow at residues 1 to 76 (MAAK…EVGP), 163 to 235 (SWWM…ASPA), 315 to 338 (GAGLPEGLLDGAQDAYGPRPAPRP), and 466 to 492 (FNFDSALPPPPPGLAGAPPPNQSWVPG). The fork-head DNA-binding region spans 88 to 182 (WGNLSYADLI…KTGKTPRRRA (95 aa)). Ser-184 carries the phosphoserine modification. Residues 192–203 (LRIKGKASKKKQ) show a composition bias toward basic residues. Residues 225-235 (PAAAKWAASPA) show a composition bias toward low complexity. The segment covering 472–486 (LPPPPPGLAGAPPPN) has biased composition (pro residues).

Phosphorylation of Ser-184 is be important in regulating the transacriptional activity.

Its subcellular location is the cytoplasm. It is found in the nucleus. Transcriptional activator. The sequence is that of Forkhead box protein O6 (FOXO6) from Homo sapiens (Human).